A 446-amino-acid polypeptide reads, in one-letter code: Argininosuccinate synthase (446 aa).

Residues Ala-17–Ser-25 and Ala-43 contribute to the ATP site. Position 99 (Tyr-99) interacts with L-citrulline. Positions 129 and 131 each coordinate ATP. L-aspartate contacts are provided by Thr-131, Asn-135, and Asp-136. Residue Asn-135 coordinates L-citrulline. Asp-136 lines the ATP pocket. Arg-139 and Ser-192 together coordinate L-citrulline. Residue Asp-194 participates in ATP binding. Residues Thr-201, Glu-203, and Glu-280 each coordinate L-citrulline.

It belongs to the argininosuccinate synthase family. Type 2 subfamily. In terms of assembly, homotetramer.

It localises to the cytoplasm. It catalyses the reaction L-citrulline + L-aspartate + ATP = 2-(N(omega)-L-arginino)succinate + AMP + diphosphate + H(+). It functions in the pathway amino-acid biosynthesis; L-arginine biosynthesis; L-arginine from L-ornithine and carbamoyl phosphate: step 2/3. This is Argininosuccinate synthase from Methylibium petroleiphilum (strain ATCC BAA-1232 / LMG 22953 / PM1).